Consider the following 100-residue polypeptide: MFAVIETGGKQYLVKEGSIIKVEKLEAEEKKEVEINKVICISNSGLSYSSNATVKAEVLEQCRGEKIIIFKKKRRKNYRRKTGHRQYITVLRINEISLQK.

Belongs to the bacterial ribosomal protein bL21 family. In terms of assembly, part of the 50S ribosomal subunit. Contacts protein L20.

In terms of biological role, this protein binds to 23S rRNA in the presence of protein L20. The sequence is that of Large ribosomal subunit protein bL21 from Wolbachia pipientis wMel.